We begin with the raw amino-acid sequence, 660 residues long: Sodium/nucleoside cotransporter 2 (660 aa).

At Ser46 the chain carries Phosphoserine. 14 helical membrane-spanning segments follow: residues 82–102 (ILLGLLCLAYAAYFLAACILN), 106–125 (ALALFVITCLVIFILACHFL), 150–168 (KRVFVGLSVVGLILWLALD), 174–194 (EQLISFAGICMFILILFACSK), 202–222 (RTVFWGLGLQFIFGILVIRTE), 235–255 (IQIFLAYTVEGSSFVFGDTLV), 262–282 (QSLPIIIFFGCVMSILYYLGL), 297–316 (TMGTTAAETLAVAGNIFVGM), 338–357 (VMTGGFATIAGTVLGAFISF), 364–383 (LISASVMAAPCALALSKLVY), 425–445 (VAANLIAFLAVLAFINATLSW), 456–476 (SFQVICSYVLRPMVFMMGVQW), 531–551 (TTFSLCGFANLSSIGITLGGL), and 569–589 (ALFTGACVSFISACMAGILYV).

The protein belongs to the concentrative nucleoside transporter (CNT) (TC 2.A.41) family.

The protein resides in the membrane. It is found in the apicolateral cell membrane. It carries out the reaction adenosine(out) + Na(+)(out) = adenosine(in) + Na(+)(in). The catalysed reaction is inosine(out) + Na(+)(out) = inosine(in) + Na(+)(in). The enzyme catalyses guanosine(out) + Na(+)(out) = guanosine(in) + Na(+)(in). It catalyses the reaction uridine(out) + Na(+)(out) = uridine(in) + Na(+)(in). Its function is as follows. Sodium-dependent and purine-selective transporter. Exhibits the transport characteristics of the nucleoside transport system cif or N1 subtype (N1/cif) (selective for purine nucleosides and uridine). Plays a critical role in specific uptake and salvage of purine nucleosides in kidney and other tissues. May contribute to regulate the transport of organic compounds in testes across the blood-testis-barrier. The protein is Sodium/nucleoside cotransporter 2 (Slc28a2) of Mus musculus (Mouse).